The sequence spans 1262 residues: MKITNKSVDKQHIEKLDELRKNVSCTVIGFAEQTAELQQEISELFIAEFGVNGPIDMNSLSKLARITSYYASSEYFQGLAKYQRTACKMFITWQTLRKEAMECRSKDREIFASIPAKLCFFYFYNGELCRAVVCLLDYIDLSDDTLAKEAALRWLMFLGETELIEKKLKTWKMDKSSKDMFSATEFAMNYLKKSEYRVEMLEKLMKLRDKVKSDPTRSFSRYELASYVSWLCSTLSNVPVGSALRECEFPDRVSHIQEAALKSDSLVRNRIPGLASSQFDNSVNASIWPFLDGHQEDSNYYVHIGSTIAWHFEMRRECALVNVTTAQTRDSMSAMILNLRVALKSASFFRVLQTTNTLAYYSSIIEEAGSEKNAKLMRVSCVNLLSSNPIIVRCSTPKETGATSRAHTPMAGSSVSEKQNTMRPDLADLLGDLELLDEQSFHPITRSCVCNVCTIYPLHSSFAAEYMMSYAIHSDFSQLSIKHFNDEFARIRERGMSSQVLMHRDSSVRPRPNIIQNEIFGMCVIRWLTKKLDSKESADEDTMEIFNNALKIVRYLQQRTTDMILAVTQLGRQLEFPMECNYSWMRPTIRKPRVKATIDCAVDILRAVSPFGRRPKVEKLEKNLQPFDKERFEKVRLAMRNEMNHYGHILYREWRCRLFAYVGRTSRDPWEAAYAWAESTQIGARNAVQSRLEKCKRGLVTMSGHDRFKTCVQSMPDEMTLVQIAMADDKTIYLVKLHADRDPIIMPLAHYSQAVELMDKFTFLLDEDEMIAKYPGDITPEEFWKRRKIVDGRMMTFVDEVQKHFLGVAASLLMPSGQLGPKAAELAIKIHKLSKGGLLLGEAKEMVYQSKLMDAKSWEALILRFCEMRTTDEKFKSFLPLMHRNSVEVMNQDDSIVTEKKYTYLVICPHLSQFCWERLPIFDEYPYVGRQVSIHSTFSQLEAMKSQEKQIPLQIDVQNAYYILDPDNNLGETQKRMVEYINKFNWEGTVGSAPKSNEISAALSQRDAFFFIGHGSGSSVMPRSVLKQSTCNAISLLMGCGSVRTIPQALGFDGKTAILDYAMAKCPLIVGCLWTVTDGEIDRFLIRMIDDCFEDSKSLTGIDKLRQLSEAMHEARSKARLKYLTGAAVVMYGLPVVAKQTTPFVEKDQRNLPQTPKTSARTSMRMETVPKTPKQEFVTSKSVPMTPIFSNNENKSPSRARMPSRVLKTPRQVKTFQEEDDEAPKRSTTRQLKPLVAPPIPATPTTRTTRSSARTPSRSRNL.

One can recognise a Peptidase C50 domain in the interval 957-1051 (VQNAYYILDP…SVRTIPQALG (95 aa)). The active site involves C1040. The tract at residues 1147 to 1262 (KDQRNLPQTP…ARTPSRSRNL (116 aa)) is disordered. 2 stretches are compositionally biased toward polar residues: residues 1151 to 1162 (NLPQTPKTSART) and 1177 to 1197 (FVTS…NKSP). Positions 1243–1262 (TPTTRTTRSSARTPSRSRNL) are enriched in low complexity.

In terms of assembly, forms a complex with securin-like protein ify-1 (via C-terminus). Interaction with ify-1 stabilizes sep-1. Also maintains the complex in the cytoplasm during interphase and recruits it to chromosomes during the first meiotic division. As to expression, expressed in oocytes. Expressed in male germline. Expressed in spermatocytes but undetectable in spermatids (at protein level).

It localises to the cytoplasm. The protein localises to the chromosome. Its subcellular location is the cytoplasmic granule. It is found in the cytoskeleton. The protein resides in the microtubule organizing center. It localises to the centrosome. The protein localises to the spindle. Its subcellular location is the cleavage furrow. It is found in the midbody. It catalyses the reaction All bonds known to be hydrolyzed by this endopeptidase have arginine in P1 and an acidic residue in P4. P6 is often occupied by an acidic residue or by a hydroxy-amino-acid residue, the phosphorylation of which enhances cleavage.. Probably maintained in an inactive state via its interaction with securin ify-1 which acts as a pseudosubstrate thereby blocking access to the catalytic site. Upon ify-1 degradation at the onset of anaphase, sep-1 is likely to become active. In addition, interaction with ify-1 stabilizes sep-1. Cysteine protease, which plays a central role in homologous chromosome separation during meiosis I and in sister chromatid separation during embryonic mitosis. Promotes chromosome/sister chromatid segregation by cleaving the scc-1 (mitosis) and rec-8 (meiosis) subunits of the cohesin complex at the onset of anaphase. May cleave histone H3-like protein cpar-1 during meiosis I metaphase-anaphase transition. Promotes cortical granule exocytosis after oocyte fertilization during the first meiotic anaphase. Essential for embryonic cytokinesis by regulating rab-11-positive vesicle trafficking at the plasma membrane at the cleavage furrow and midbody. Regulates centriole segregation during spermatocyte meiosis. Required for embryonic anterior-posterior axis formation. This chain is Separin homolog sep-1, found in Caenorhabditis elegans.